We begin with the raw amino-acid sequence, 175 residues long: Pituitary adenylate cyclase-activating polypeptide (175 aa).

The signal sequence occupies residues 1–24 (MTMCSGARLALLVYGIIMHSSVSC). Residues 25 to 78 (SPAAGLSFPGIRPEDEAYDQDGNPLQDFYDWDPPGVGSPASALRDAYALYYPAD) constitute a propeptide that is removed on maturation. Residues 149 to 157 (VKKYLAAVL) are important for receptor binding. Position 157 is a leucine amide (L157). At K168 the chain carries Lysine amide. The propeptide occupies 172 to 175 (IAYL).

The protein belongs to the glucagon family.

It localises to the secreted. In terms of biological role, PACAP is a neuropeptide involved in diverse array of physiological processes through activating the PACAP subfamily of class B1 G protein-coupled receptors: VIP receptor 1 (VIPR1), VIP receptor 2 (VIPR2), and PACAP type I receptor (ADCYAP1R1). Exerts neuroprotective and general cytoprotective effects due to anti-apoptotic, anti-inflammatory, and antioxidant actions. Promotes neuron projection development through the RAPGEF2/Rap1/B-Raf/ERK pathway. In chromaffin cells, induces long-lasting increase of intracellular calcium concentrations and neuroendocrine secretion. Involved in the control of glucose homeostasis, induces insulin secretion by pancreatic beta cells. PACAP exists in two bioactive forms from proteolysis of the same precursor protein, PACAP27 and PACAP38, which differ by eleven amino acid residues in the C-terminus. The chain is Pituitary adenylate cyclase-activating polypeptide from Mus musculus (Mouse).